A 134-amino-acid polypeptide reads, in one-letter code: Ribonuclease VapC (134 aa).

The region spanning 4–124 (IVDTSIIIAL…NTKDFKRIPE (121 aa)) is the PINc domain. D6 provides a ligand contact to Mg(2+).

This sequence belongs to the PINc/VapC protein family. Requires Mg(2+) as cofactor.

Its function is as follows. Toxic component of a type II toxin-antitoxin (TA) system. Has ssRNase activity. Its RNase activity is partially neutralized by cognate antitoxin VapB. Rapidly induces apoptosis upon microinjection into mouse fibroblasts (L929 line). Probably contributes to host cell death if bacterial cell lysis occurs during host infection. In Rickettsia bellii (strain RML369-C), this protein is Ribonuclease VapC.